We begin with the raw amino-acid sequence, 395 residues long: Tyrosine--tRNA ligase 2 (395 aa).

The 'HIGH' region signature appears at proline 42–histidine 51. The short motif at lysine 226 to serine 230 is the 'KMSKS' region element. Lysine 229 provides a ligand contact to ATP. Residues threonine 334–isoleucine 394 form the S4 RNA-binding domain.

Belongs to the class-I aminoacyl-tRNA synthetase family. TyrS type 2 subfamily. In terms of assembly, homodimer.

The protein localises to the cytoplasm. It catalyses the reaction tRNA(Tyr) + L-tyrosine + ATP = L-tyrosyl-tRNA(Tyr) + AMP + diphosphate + H(+). Catalyzes the attachment of tyrosine to tRNA(Tyr) in a two-step reaction: tyrosine is first activated by ATP to form Tyr-AMP and then transferred to the acceptor end of tRNA(Tyr). This is Tyrosine--tRNA ligase 2 from Vibrio parahaemolyticus serotype O3:K6 (strain RIMD 2210633).